Here is a 411-residue protein sequence, read N- to C-terminus: Carbohydrate sulfotransferase 1 (411 aa).

At 1–2 (MQ) the chain is on the cytoplasmic side. A helical; Signal-anchor for type II membrane protein transmembrane segment spans residues 3 to 23 (CSWKAVLLLALASIAIQYTAI). Topologically, residues 24 to 411 (RTFTAKSFHT…VEERDFRPFL (388 aa)) are lumenal. An N-linked (GlcNAc...) asparagine glycan is attached at Asn56. Residue 69-75 (TRSGSSF) participates in 3'-phosphoadenylyl sulfate binding. N-linked (GlcNAc...) asparagine glycosylation is found at Asn145 and Asn189. 234–242 (RDPRGILAS) provides a ligand contact to 3'-phosphoadenylyl sulfate. Residue Asn334 is glycosylated (N-linked (GlcNAc...) asparagine). Positions 337 to 339 (RGD) match the Cell attachment site motif.

The protein belongs to the sulfotransferase 1 family. Gal/GlcNAc/GalNAc subfamily. Broadly expressed with highest levels in central nervous system. Expressed in cortex (at protein level). Expressed in high endothelial venules in peripheral lymph nodes, mesenteric lymph nodes and Peyer's patches.

It is found in the golgi apparatus membrane. It carries out the reaction 3'-phosphoadenylyl sulfate + keratan = adenosine 3',5'-bisphosphate + keratan 6'-sulfate.. Its pathway is glycan metabolism. Its function is as follows. Sulfotransferase that utilizes 3'-phospho-5'-adenylyl sulfate (PAPS) as sulfonate donor to catalyze the transfer of sulfate to position 6 of internal galactose (Gal) residues of keratan. Cooperates with B4GALT4 and B3GNT7 glycosyltransferases and CHST6 sulfotransferase to construct and elongate disulfated disaccharide unit [-&gt;3(6-sulfoGalbeta)1-&gt;4(6-sulfoGlcNAcbeta)1-&gt;] within keratan sulfate polymer. Has a preference for sulfating keratan sulfate, but it also transfers sulfate to the unsulfated polymer. Involved in biosynthesis of phosphacan, a major keratan sulfate proteoglycan in the developing brain. Involved in biosynthesis of 6-sulfoGalbeta-containing O-linked glycans in high endothelial venules of lymph nodes. May act in a synergistic manner with CHST4 to generate sialyl 6',6-disulfo Lewis X motif, a recognition determinant for immune cell receptors implicated in leukocyte trafficking. Catalyzes sulfation of N-acetyllactosamine (LacNAc) oligosaccharides with highest efficiency for sialylated LacNAc structures. This Mus musculus (Mouse) protein is Carbohydrate sulfotransferase 1 (Chst1).